The following is a 187-amino-acid chain: Ubiquinone biosynthesis protein COQ4 homolog, mitochondrial (187 aa).

Residues H77, D78, H81, and E93 each coordinate Zn(2+).

Belongs to the COQ4 family. In terms of assembly, component of a multi-subunit COQ enzyme complex. Zn(2+) is required as a cofactor.

It is found in the mitochondrion inner membrane. It carries out the reaction a 4-hydroxy-3-methoxy-5-(all-trans-polyprenyl)benzoate + H(+) = a 2-methoxy-6-(all-trans-polyprenyl)phenol + CO2. It participates in cofactor biosynthesis; ubiquinone biosynthesis. Lyase that catalyzes the C1-decarboxylation of 4-hydroxy-3-methoxy-5-(all-trans-polyprenyl)benzoic acid into 2-methoxy-6-(all-trans-polyprenyl)phenol during ubiquinone biosynthesis. The protein is Ubiquinone biosynthesis protein COQ4 homolog, mitochondrial of Leishmania major.